A 223-amino-acid chain; its full sequence is Protein-disulfide oxidoreductase DsbI (223 aa).

Residues 26 to 46 form a helical membrane-spanning segment; that stretch reads LLWLLMAVAMGALIILAHSFF. An intrachain disulfide couples cysteine 55 to cysteine 58. 2 helical membrane passes run 59–78 and 82–102; these read VYIR…AAIN and IILK…GLKF. Residues cysteine 127 and cysteine 153 are joined by a disulfide bond. The chain crosses the membrane as a helical span at residues 198 to 218; that stretch reads CMLAFGMCLVLLVIMSGAWAL.

The protein belongs to the DsbB family. DsbI subfamily. Interacts with DsbL.

It localises to the cell inner membrane. Functionally, required for disulfide bond formation in some proteins. Part of a redox system composed of DsbI and DsbL that mediates formation of an essential disulfide bond in AssT. In Escherichia coli O1:K1 / APEC, this protein is Protein-disulfide oxidoreductase DsbI.